The chain runs to 336 residues: Monoacylglycerol lipase ABHD6 (336 aa).

Over 1-8 (MDLDVVNM) the chain is Extracellular. A helical; Signal-anchor for type II membrane protein membrane pass occupies residues 9-29 (FVIAGGTLAIPILAFVASFLL). The Cytoplasmic segment spans residues 30–336 (WPSALIRIYY…VHNTDNKKLN (307 aa)). Serine 148 functions as the Nucleophile in the catalytic mechanism. Residues aspartate 278 and histidine 306 each act as charge relay system in the active site.

Belongs to the AB hydrolase superfamily. As to expression, widely expressed with higher expression in small intestine, liver and brown adipose tissue. In brain, expressed postsynaptically in cortical neurons but not detected in microglia (at protein level).

The protein localises to the late endosome membrane. It localises to the lysosome membrane. It is found in the mitochondrion membrane. It carries out the reaction Hydrolyzes glycerol monoesters of long-chain fatty acids.. The enzyme catalyses 2-(5Z,8Z,11Z,14Z-eicosatetraenoyl)-glycerol + H2O = glycerol + (5Z,8Z,11Z,14Z)-eicosatetraenoate + H(+). The catalysed reaction is 1-octanoylglycerol + H2O = octanoate + glycerol + H(+). It catalyses the reaction 1-decanoylglycerol + H2O = decanoate + glycerol + H(+). It carries out the reaction 1-dodecanoylglycerol + H2O = dodecanoate + glycerol + H(+). The enzyme catalyses 1-tetradecanoylglycerol + H2O = tetradecanoate + glycerol + H(+). The catalysed reaction is 2-hexadecanoylglycerol + H2O = glycerol + hexadecanoate + H(+). It catalyses the reaction 2-(9Z-octadecenoyl)-glycerol + H2O = glycerol + (9Z)-octadecenoate + H(+). It carries out the reaction 1-(9Z-octadecenoyl)-glycerol + H2O = glycerol + (9Z)-octadecenoate + H(+). The enzyme catalyses 2-(9Z,12Z-octadecadienoyl)-glycerol + H2O = (9Z,12Z)-octadecadienoate + glycerol + H(+). The catalysed reaction is 1-(5Z,8Z,11Z,14Z-eicosatetraenoyl)-glycerol + H2O = glycerol + (5Z,8Z,11Z,14Z)-eicosatetraenoate + H(+). It catalyses the reaction 1-(9Z,12Z-octadecadienoyl)-glycerol + H2O = (9Z,12Z)-octadecadienoate + glycerol + H(+). It carries out the reaction 3-(9Z-octadecenoyl)-sn-glycero-1-phospho-(3'-(9Z-octadecenoyl)-1'-sn-glycerol) + H2O = 3-(9Z-octadecenoyl)-sn-glycero-1-phospho-(1'-sn-glycerol) + (9Z)-octadecenoate + H(+). The enzyme catalyses (S,S)-2-(9Z-octadecenoyl)-sn-glycero-1-phospho-(2'-(9Z-octadecenoyl)-1'-sn-glycerol) + H2O = (S,S)-2-(9Z-octadecenoyl)-sn-glycero-1-phospho-(1'-sn-glycerol) + (9Z)-octadecenoate + H(+). The catalysed reaction is (R,R)-2-(9Z-octadecenoyl)-sn-glycero-3-phospho-(2'-(9Z-octadecenoyl)-3'-sn-glycerol) + H2O = (R,R)-2-(9Z-octadecenoyl)-sn-glycero-3-phospho-(3'-sn-glycerol) + (9Z)-octadecenoate + H(+). Functionally, lipase that preferentially hydrolysis medium-chain saturated monoacylglycerols including 2-arachidonoylglycerol. Through 2-arachidonoylglycerol degradation may regulate endocannabinoid signaling pathways. Also has a lysophosphatidyl lipase activity with a preference for lysophosphatidylglycerol among other lysophospholipids. Also able to degrade bis(monoacylglycero)phosphate (BMP) and constitutes the major enzyme for BMP catabolism. BMP, also known as lysobisphosphatidic acid, is enriched in late endosomes and lysosomes and plays a key role in the formation of intraluminal vesicles and in lipid sorting. This is Monoacylglycerol lipase ABHD6 from Mus musculus (Mouse).